Consider the following 286-residue polypeptide: Deleted in azoospermia-like (286 aa).

The 76-residue stretch at 30 to 105 (NTVFVGGIDI…KKLKLGPAIR (76 aa)) folds into the RRM domain. Residues 155–180 (ACPYPSSPPMAIQQIPVGCQQPSYFQ) form the DAZ domain.

This sequence belongs to the RRM DAZ family. Interacts with the C-terminus of pabp1 and with epabp. Prior to oocyte maturation, found in a complex with epabp and pum2 proteins and spdy1 mRNA; pum2 dissociates from the complex during maturation. In terms of tissue distribution, germ-line specific; expressed in adult testis and ovary. Localized specifically to the oocyte and embryonic germ plasm and to migrating primordial germ cells (PGCs).

It localises to the cytoplasm. Functionally, RNA-binding protein that is required for primordial germ cell (PGC) differentiation and indirectly necessary for the migration of PGCs through the endoderm. May promote meiotic cell division during spermatogenesis. Shows a preference for G- and U-rich RNAs and probably binds the 3'-UTR of target mRNAs. Stimulates the initiation of translation of mRNAs through the recruitment of poly(A)-binding proteins (PABPs). The protein is Deleted in azoospermia-like of Xenopus tropicalis (Western clawed frog).